The following is a 364-amino-acid chain: Salivary endonuclease (364 aa).

A signal peptide spans 1–24; the sequence is MSSFFLSISPLVLALFHVVVQVCS. A glycan (N-linked (GlcNAc...) asparagine) is linked at Asn-285.

The protein belongs to the DNA/RNA non-specific endonuclease family. Requires Mg(2+) as cofactor. In terms of tissue distribution, saliva (at protein level). Female salivary gland.

It localises to the secreted. In terms of biological role, hydrolyzes double-stranded DNA with no sequence specificity. Does not cleave ssDNA and RNA. May facilitate blood meal intake by lowering the local viscosity created by the release of host DNA. This is Salivary endonuclease from Culex quinquefasciatus (Southern house mosquito).